Consider the following 365-residue polypeptide: Endophilin-B1 (365 aa).

Position 1 is an N-acetylmethionine (Met1). The segment at 1 to 30 (MNIMDFNVKKLAADAGTFLSRAVQFTEEKL) is membrane-binding amphipathic helix. Residues 1–37 (MNIMDFNVKKLAADAGTFLSRAVQFTEEKLGQAEKTE) are required for membrane binding. The BAR domain occupies 27 to 261 (EEKLGQAEKT…LGSFPSNYVS (235 aa)). Thr145 carries the phosphothreonine; by CDK5 modification. A coiled-coil region spans residues 156-185 (KTIAKERKLLQNKRLDLDAAKTRLKKAKAA). In terms of domain architecture, SH3 spans 305-365 (SSTRKARVLY…VPITYLELLN (61 aa)).

Belongs to the endophilin family. As to quaternary structure, homodimer, and heterodimer with SH3GLB2. Binds BAX; induction of apoptosis augments BAX binding. Binds DNM1, HTT, AMPH, BIN1 and ARFGAP1. Interacts with UVRAG; UVRAG bridges the interaction to BECN1 indicative for an association with the PI3K complex II (PI3KC3-C2). In terms of processing, phosphorylated at Thr-145 by CDK5; this phosphorylation is required for autophagy induction in starved neurons and facilitates homodimerization. Expressed in brain, heart, lung and spleen. Low level in liver and testis.

It is found in the cytoplasm. It localises to the golgi apparatus membrane. Its subcellular location is the mitochondrion outer membrane. The protein resides in the cytoplasmic vesicle. The protein localises to the autophagosome membrane. It is found in the midbody. May be required for normal outer mitochondrial membrane dynamics. Required for coatomer-mediated retrograde transport in certain cells. May recruit other proteins to membranes with high curvature. May promote membrane fusion. Involved in activation of caspase-dependent apoptosis by promoting BAX/BAK1 activation. Involved in caspase-independent apoptosis during nutrition starvation and involved in the regulation of autophagy. Activates lipid kinase activity of PIK3C3 during autophagy probably by associating with the PI3K complex II (PI3KC3-C2). Associated with PI3KC3-C2 during autophagy may regulate the trafficking of ATG9A from the Golgi complex to the peripheral cytoplasm for the formation of autophagosomes by inducing Golgi membrane tubulation and fragmentation. Involved in regulation of degradative endocytic trafficking and cytokinesis, probably in the context of PI3KC3-C2. In Rattus norvegicus (Rat), this protein is Endophilin-B1.